The chain runs to 734 residues: Photosystem I P700 chlorophyll a apoprotein A2 (734 aa).

8 helical membrane-spanning segments follow: residues 46-69, 135-158, 175-199, 273-291, 330-353, 369-395, 417-439, and 517-535; these read IFAS…FHVA, LYNG…LHLE, LNHH…HVAI, IAHH…GHMY, LHFQ…QHMY, AALY…IFFI, AIIS…LYVH, and FLVH…LILV. Positions 559 and 568 each coordinate [4Fe-4S] cluster. A run of 2 helical transmembrane segments spans residues 575–596 and 643–665; these read AFYL…YWHW and LAVW…MFLI. Chlorophyll a contacts are provided by His654, Met662, and Tyr670. Residue Trp671 participates in phylloquinone binding. Residues 707–727 traverse the membrane as a helical segment; that stretch reads LVGLAHFSVGYVFTYAAFLIA.

The protein belongs to the PsaA/PsaB family. In terms of assembly, the PsaA/B heterodimer binds the P700 chlorophyll special pair and subsequent electron acceptors. PSI consists of a core antenna complex that captures photons, and an electron transfer chain that converts photonic excitation into a charge separation. The eukaryotic PSI reaction center is composed of at least 11 subunits. The cofactor is P700 is a chlorophyll a/chlorophyll a' dimer, A0 is one or more chlorophyll a, A1 is one or both phylloquinones and FX is a shared 4Fe-4S iron-sulfur center..

It is found in the plastid. The protein resides in the chloroplast thylakoid membrane. It catalyses the reaction reduced [plastocyanin] + hnu + oxidized [2Fe-2S]-[ferredoxin] = oxidized [plastocyanin] + reduced [2Fe-2S]-[ferredoxin]. PsaA and PsaB bind P700, the primary electron donor of photosystem I (PSI), as well as the electron acceptors A0, A1 and FX. PSI is a plastocyanin/cytochrome c6-ferredoxin oxidoreductase, converting photonic excitation into a charge separation, which transfers an electron from the donor P700 chlorophyll pair to the spectroscopically characterized acceptors A0, A1, FX, FA and FB in turn. Oxidized P700 is reduced on the lumenal side of the thylakoid membrane by plastocyanin or cytochrome c6. In Euglena gracilis, this protein is Photosystem I P700 chlorophyll a apoprotein A2.